The sequence spans 651 residues: NADH oxidase (651 aa).

FMN is bound at residue Q104. Y175 acts as the Proton donor in catalysis. Residues R223 and 320–321 (GR) each bind FMN. Positions 344, 347, 351, and 364 each coordinate [4Fe-4S] cluster. FAD contacts are provided by A396, E415, Q423, K433, and A460.

It in the N-terminal section; belongs to the NADH:flavin oxidoreductase/NADH oxidase family. In terms of assembly, homohexamer. FMN serves as cofactor. Requires FAD as cofactor. [4Fe-4S] cluster is required as a cofactor. The N-terminus is blocked.

It catalyses the reaction A + NADH + H(+) = AH2 + NAD(+). In terms of biological role, reduces a range of alternative electron acceptors. In Thermoanaerobacter brockii (Thermoanaerobium brockii), this protein is NADH oxidase.